Here is a 260-residue protein sequence, read N- to C-terminus: 3'-5' ssDNA/RNA exonuclease TatD (260 aa).

The a divalent metal cation site is built by E92, H128, and H153.

This sequence belongs to the metallo-dependent hydrolases superfamily. TatD-type hydrolase family. TatD subfamily. In terms of assembly, monomer. The cofactor is Mg(2+).

It is found in the cytoplasm. 3'-5' exonuclease that prefers single-stranded DNA and RNA. May play a role in the H(2)O(2)-induced DNA damage repair. The protein is 3'-5' ssDNA/RNA exonuclease TatD of Pantoea vagans (strain C9-1) (Pantoea agglomerans (strain C9-1)).